Reading from the N-terminus, the 5202-residue chain is Usherin (5202 aa).

Residues 1 to 31 (MNCPVLSLGSGFLFQVIEMLIFAYFASISLT) form the signal peptide. The Extracellular portion of the chain corresponds to 32 to 5042 (ESRGLFPRLE…KSTEFYSELW (5011 aa)). One can recognise a Laminin N-terminal domain in the interval 271-517 (QDFRLYQVAL…AVDEITISGR (247 aa)). Asparagine 361 and asparagine 451 each carry an N-linked (GlcNAc...) asparagine glycan. 40 cysteine pairs are disulfide-bonded: cysteine 518/cysteine 527, cysteine 520/cysteine 536, cysteine 538/cysteine 549, cysteine 552/cysteine 572, cysteine 575/cysteine 584, cysteine 577/cysteine 605, cysteine 608/cysteine 617, cysteine 620/cysteine 638, cysteine 641/cysteine 655, cysteine 643/cysteine 662, cysteine 664/cysteine 673, cysteine 676/cysteine 691, cysteine 694/cysteine 708, cysteine 696/cysteine 715, cysteine 717/cysteine 726, cysteine 729/cysteine 744, cysteine 747/cysteine 759, cysteine 749/cysteine 766, cysteine 768/cysteine 777, cysteine 780/cysteine 792, cysteine 795/cysteine 808, cysteine 797/cysteine 815, cysteine 817/cysteine 826, cysteine 829/cysteine 844, cysteine 847/cysteine 861, cysteine 849/cysteine 868, cysteine 870/cysteine 879, cysteine 882/cysteine 897, cysteine 900/cysteine 913, cysteine 902/cysteine 920, cysteine 922/cysteine 931, cysteine 934/cysteine 948, cysteine 951/cysteine 963, cysteine 953/cysteine 970, cysteine 972/cysteine 982, cysteine 985/cysteine 999, cysteine 1002/cysteine 1014, cysteine 1004/cysteine 1021, cysteine 1023/cysteine 1032, and cysteine 1035/cysteine 1050. Laminin EGF-like domains lie at 518–574 (CQCH…NCKP), 575–640 (CQCN…VCKP), 641–693 (CDCD…GCSP), 694–746 (CNCN…GCEP), 747–794 (CQCN…NCKA), 795–846 (CDCD…LCLP), 847–899 (CNCD…HCQM), 900–950 (CECD…GCLP), 951–1001 (CSCH…RCQP), and 1002–1052 (CNCH…GCSK). 2 N-linked (GlcNAc...) asparagine glycosylation sites follow: asparagine 587 and asparagine 611. N-linked (GlcNAc...) asparagine glycosylation occurs at asparagine 650. A glycan (N-linked (GlcNAc...) asparagine) is linked at asparagine 697. N-linked (GlcNAc...) asparagine glycosylation is found at asparagine 839, asparagine 856, and asparagine 862. Asparagine 888 is a glycosylation site (N-linked (GlcNAc...) asparagine). N-linked (GlcNAc...) asparagine glycosylation occurs at asparagine 944. N-linked (GlcNAc...) asparagine glycosylation occurs at asparagine 1011. 4 consecutive Fibronectin type-III domains span residues 1058–1146 (PPPR…TKPG), 1148–1244 (PEGN…APPQ), 1245–1363 (RLSP…SAPV), and 1364–1468 (FMIP…AAPA). 3 N-linked (GlcNAc...) asparagine glycosylation sites follow: asparagine 1071, asparagine 1151, and asparagine 1174. N-linked (GlcNAc...) asparagine glycans are attached at residues asparagine 1379, asparagine 1388, asparagine 1479, and asparagine 1635. 2 Laminin G-like domains span residues 1517 to 1709 (MKGI…WEGC) and 1714 to 1891 (NEGA…LDGC). Cysteine 1672 and cysteine 1709 are disulfide-bonded. Residue asparagine 1779 is glycosylated (N-linked (GlcNAc...) asparagine). Cysteine 1862 and cysteine 1891 are disulfide-bonded. 14 consecutive Fibronectin type-III domains span residues 1869-1955 (TRGA…AAPQ), 1957-2054 (VPTP…TPQE), 2055-2144 (APQE…LPPE), 2145-2239 (HVDS…TDED), 2243-2330 (GVPA…APPE), 2331-2433 (GTVN…MPPG), 2437-2531 (GVLP…TAED), 2535-2622 (PVVP…TLPG), 2624-2722 (PEGI…TRPS), 2726-2819 (GVQP…THPT), 2820-2923 (VPQN…TLAG), 2927-3018 (RGAN…TCDG), 3022-3112 (GMLP…TPSD), and 3113-3209 (IPTP…CCEE). 14 N-linked (GlcNAc...) asparagine glycosylation sites follow: asparagine 1903, asparagine 2011, asparagine 2014, asparagine 2048, asparagine 2130, asparagine 2182, asparagine 2195, asparagine 2258, asparagine 2285, asparagine 2322, asparagine 2377, asparagine 2382, asparagine 2407, and asparagine 2413. 6 N-linked (GlcNAc...) asparagine glycosylation sites follow: asparagine 2581, asparagine 2584, asparagine 2656, asparagine 2710, asparagine 2770, and asparagine 2788. Asparagine 2930, asparagine 2937, asparagine 2970, asparagine 3032, and asparagine 3099 each carry an N-linked (GlcNAc...) asparagine glycan. Residues asparagine 3217, asparagine 3330, asparagine 3419, and asparagine 3433 are each glycosylated (N-linked (GlcNAc...) asparagine). 2 disulfide bridges follow: cysteine 3371–cysteine 3444 and cysteine 3399–cysteine 3425. Fibronectin type-III domains are found at residues 3403 to 3497 (CPAS…TKED), 3501 to 3589 (GVSP…TQGV), 3592 to 3682 (SILP…AAPE), 3684 to 3770 (VWVT…TPMS), 3774 to 3865 (EIYP…TPEA), 3866 to 3963 (APMD…TLEA), 3964 to 4067 (PPQD…SSPS), 4068 to 4153 (GLRN…TDEA), 4157 to 4261 (SQLA…TLQA), 4262 to 4357 (PPEG…AAPS), 4358 to 4445 (EVSP…ALPE), 4446 to 4530 (NMDS…TSPS), 4534 to 4630 (GMEP…TPEI), 4636 to 4733 (PPPH…TGPA), 4734 to 4827 (PPEG…THPA), and 4828 to 4927 (PPSG…SFTT). N-linked (GlcNAc...) asparagine glycans are attached at residues asparagine 3653, asparagine 3694, asparagine 3733, asparagine 3780, and asparagine 3849. Asparagine 3984 carries N-linked (GlcNAc...) asparagine glycosylation. N-linked (GlcNAc...) asparagine glycans are attached at residues asparagine 4202, asparagine 4226, asparagine 4317, and asparagine 4418. The disordered stretch occupies residues 4518–4541 (ILSPLVKDRTSPSAPSGMEPPKLQ). N-linked (GlcNAc...) asparagine glycans are attached at residues asparagine 4564, asparagine 4583, asparagine 4691, asparagine 4754, and asparagine 4800. N-linked (GlcNAc...) asparagine glycans are attached at residues asparagine 4943 and asparagine 4950. A helical membrane pass occupies residues 5043-5063 (FIVLMAMLGLILLAIFLSLIL). Residues 5064 to 5202 (QRKIHKEPYI…ERTTFTDTHL (139 aa)) are Cytoplasmic-facing. A PDZ-binding motif is present at residues 5200-5202 (THL).

As to quaternary structure, interacts with collagen IV and fibronectin via its laminin EGF-like domains. Interaction with collagen may be required for stable integration into the basement membrane. Interacts with NINL. Interacts with USH1C. Component of USH2 complex, composed of ADGRV1, PDZD7, USH2A and WHRN. Interacts with ADGRV1/MASS1 (via N-terminal PDZ domain). Interacts (via the cytoplasmic region) with WHRN. Interacts (via the cytoplasmic region) with PDZD7. Interacts (via the cytoplasmic region) with VEZT and MYO7A (via MyTH4-FERM domains); the interaction associates VEZT with the USH2 complex at the stereocilia base. As to expression, present in the basement membrane of many, but not all tissues. Expressed in retina, cochlea, small and large intestine, pancreas, bladder, prostate, esophagus, trachea, thymus, salivary glands, placenta, ovary, fallopian tube, uterus and testis. Absent in many other tissues such as heart, lung, liver, kidney and brain. In the retina, it is present in the basement membranes in the Bruch's layer choroid capillary basement membranes, where it localizes just beneath the retinal pigment epithelial cells (at protein level). Weakly expressed. Isoform 2 is expressed in fetal eye, cochlea and heart, and at very low level in brain, CNS, intestine, skeleton, tongue, kidney and lung. Isoform 2 is not expressed in stomach and liver. In adult tissues, isoform 2 is expressed in neural retina and testis, and at low level in brain, heart, kidney and liver. Isoform 1 displays a similar pattern of expression but is expressed at very low level in fetal cochlea.

Its subcellular location is the cell projection. The protein resides in the stereocilium membrane. The protein localises to the secreted. Involved in hearing and vision as member of the USH2 complex. In the inner ear, required for the maintenance of the hair bundle ankle formation, which connects growing stereocilia in developing cochlear hair cells. In retina photoreceptors, the USH2 complex is required for the maintenance of periciliary membrane complex that seems to play a role in regulating intracellular protein transport. The polypeptide is Usherin (USH2A) (Homo sapiens (Human)).